The chain runs to 818 residues: Nibrin (818 aa).

Residues 22 to 70 (YVVGRKNCEILLTNDQSISRVHAVLTVTEQAVTLKDSSKYGTFVNGEKL) enclose the FHA domain. 2 BRCT domains span residues 91-168 (SKFS…SALS) and 211-301 (GKTF…LAAI). Disordered regions lie at residues 372 to 716 (AVGE…DLPR), 729 to 757 (NNSSRSRPGPLQTHNPNDKNVKRFRKKNV), and 793 to 818 (EEKLNEREETLGDDLFRYNPRPAKKR). A compositionally biased stretch (polar residues) spans 379–405 (KTNPTQKASTTNKPLSLGQEPSSTRIV). The segment covering 409–419 (VMSSESFSVVE) has biased composition (low complexity). The span at 444–469 (APSSGNTTLKHSPQKQTALTSFFQPS) shows a compositional bias: polar residues. The short motif at 470–475 (SKKRPR) is the Nuclear localization signal element. Over residues 515–530 (EETSLGQACGTGQNSS) the composition is skewed to polar residues. Residues 549-571 (TAADDLEMSLEELEFLMSDEMDE) are compositionally biased toward acidic residues. A compositionally biased stretch (polar residues) spans 586–602 (GLTSKINSEQLSNQQEV). The segment covering 603–612 (TESKGRKGEK) has biased composition (basic and acidic residues). Over residues 613–625 (NQQSSSSNIQSMQ) the composition is skewed to low complexity. Composition is skewed to polar residues over residues 633–644 (VTNQDTQTQSKR) and 653–662 (SSANKGPSKN). Positions 663–675 (KTPELEEVKKEEV) are enriched in basic and acidic residues. 2 stretches are compositionally biased toward polar residues: residues 678-692 (VVNSRPQNGISQTSE) and 699-708 (MQASTSNSGP). Over residues 793–808 (EEKLNEREETLGDDLF) the composition is skewed to basic and acidic residues. The FxF/Y motif motif lies at 804–813 (GDDLFRYNPR).

The protein belongs to the Nibrin family. In terms of assembly, component of the MRN complex composed of two heterodimers rad50 and mre11 associated with a single nbn.

It localises to the nucleus. Its subcellular location is the chromosome. The protein resides in the PML body. It is found in the telomere. Component of the MRN complex, which plays a central role in double-strand break (DSB) repair, DNA recombination, maintenance of telomere integrity and meiosis. The MRN complex is involved in the repair of DNA double-strand breaks (DSBs) via homologous recombination (HR), an error-free mechanism which primarily occurs during S and G2 phases. The complex (1) mediates the end resection of damaged DNA, which generates proper single-stranded DNA, a key initial steps in HR, and is (2) required for the recruitment of other repair factors and efficient activation of ATM and ATR upon DNA damage. The MRN complex possesses single-strand endonuclease activity and double-strand-specific 3'-5' exonuclease activity, which are provided by MRE11, to initiate end resection, which is required for single-strand invasion and recombination. Within the MRN complex, nbn acts as a protein-protein adapter, which specifically recognizes and binds phosphorylated proteins, promoting their recruitment to DNA damage sites. Recruits mre11 and rad50 components of the MRN complex to DSBs in response to DNA damage. Promotes the recruitment of PI3/PI4-kinase family members atm, atr, and probably DNA-PKcs to the DNA damage sites, activating their functions. Mediates the recruitment of phosphorylated rbbp8/CtIP to DSBs, leading to cooperation between the MRN complex and rbbp8/CtIP to initiate end resection. The MRN complex and rbbp8/CtIP are also required for chromosome alignment during metaphase. The chain is Nibrin (nbn) from Danio rerio (Zebrafish).